A 348-amino-acid chain; its full sequence is Terpene cyclase ctvD (348 aa).

A helical transmembrane segment spans residues 2 to 22 (ALSAYFLLCLSVLGLDAIYGF). N-linked (GlcNAc...) asparagine glycosylation is present at Asn-51. A run of 7 helical transmembrane segments spans residues 77–97 (PGLS…WVAI), 116–136 (LFAM…WCAI), 161–181 (LIPI…LLPE), 191–211 (QIAI…HWGL), 235–255 (FAFV…LTLI), 283–303 (GLWF…LWAM), and 323–343 (LKVG…WLLW).

The protein belongs to the membrane-bound ascI terpene cyclase family.

Its subcellular location is the membrane. Its pathway is mycotoxin biosynthesis. In terms of biological role, hydrolase; part of the gene cluster that mediates the biosynthesis of citreoviridin, an inhibitor of the of F1-ATPase beta-subunit. The HR-PKS ctvA accepts acetyl-CoA as the starter unit and catalyzes eight iterations of malonyl-CoA extension and four iterations of SAM-dependent methylation at C4, C12, C14, and C16. The KR and DH domains selectively act on the first six iterations to generate the hexaene chain. In the last three iterations, the KR and DH domains terminate their functions to yield a beta,delta-diketo ester moiety, which then undergoes intramolecular cyclization to yield an alpha-pyrone intermediate. Subsequently, ctvB methylates the alpha-pyrone hydroxyl group to generate citreomontanin. In order to form the tetrahydrofuran ring with the correct stereochemistry, the terminal alkenes of citreomontanin need to undergo isomerization to yield a (17Z)-hexaene, a step that could be catalyzed by ctvC. The (17Z)-hexaene then undergoes bisepoxidation by ctvC to form a (17R,16R,15S,14R)-bisepoxide moiety. Lastly, ctvD acts as a regioselective hydrolase to form the tetrahydrofuran ring with the substituents in the correct absolute configuration, completing the biosynthesis of citreoviridin. This chain is Terpene cyclase ctvD, found in Aspergillus terreus (strain NIH 2624 / FGSC A1156).